The primary structure comprises 238 residues: uncharacterized protein (238 aa).

3 consecutive transmembrane segments (helical) span residues 19–39 (IVIEAFPGTGLVGSIAGFQII), 79–99 (IILFSDIIISPFKINGLAEFI), and 141–161 (YVEIFDFGVVGGMGGNLLIKC).

The protein localises to the cell membrane. This is an uncharacterized protein from Methanocaldococcus jannaschii (strain ATCC 43067 / DSM 2661 / JAL-1 / JCM 10045 / NBRC 100440) (Methanococcus jannaschii).